The chain runs to 335 residues: Abasic site processing protein HMCES (335 aa).

Cysteine 2 acts as the Nucleophile in catalysis. Cysteine 2 is modified (thiazolidine linkage to a ring-opened DNA abasic site). A compositionally biased stretch (basic and acidic residues) spans 24 to 39 (QGGRKWPNWRDGDSDK). The tract at residues 24–51 (QGGRKWPNWRDGDSDKYQPSYNKSPQSN) is disordered. Polar residues predominate over residues 40–51 (YQPSYNKSPQSN). The active site involves glutamate 129. A disordered region spans residues 284–335 (LQNKSPKKEESHSIQSPKLSQFGAPPKKTSAGLMQQWLKKEDGEPSPKRAKK). Residues 321 to 335 (LKKEDGEPSPKRAKK) are compositionally biased toward basic and acidic residues.

It belongs to the SOS response-associated peptidase family. Ubiquitination of the hmces DNA-protein cross-link by rfwd3 may promotes its degradation.

The protein localises to the chromosome. Formation and reversal of DNA-protein cross-link depends on DNA context. Catalyzes formation of the thiazolidine linkage in presence of abasic sites in single-stranded DNA. Mediates the reversal of the thiazolidine cross-link in presence of double stranded DNA. Functionally, sensor of abasic sites in single-stranded DNA (ssDNA) required to preserve genome integrity by promoting error-free repair of abasic sites. Acts as an enzyme that recognizes and binds abasic sites in ssDNA at replication forks and chemically modifies the lesion by forming a covalent cross-link with DNA: forms a stable thiazolidine linkage between a ring-opened abasic site and the alpha-amino and sulfhydryl substituents of its N-terminal catalytic cysteine residue. The hmces DNA-protein cross-link is then either reversed or degraded. Hmces is able to catalyze the reversal of its thiazolidine cross-link and cycle between a cross-link and a non-cross-linked state depending on DNA context: mediates self-reversal of the thiazolidine cross-link in double stranded DNA, allowing apex1 to initiate downstream repair of abasic sites. The hmces DNA-protein cross-link can also be degraded by the sprtn metalloprotease following unfolding by the brip1/fancj helicase. Promotes error-free repair of abasic sites by protecting abasic sites from translesion synthesis (TLS) polymerases and endonucleases that are error-prone and would generate mutations and double-strand breaks. Acts as a protease: mediates autocatalytic processing of its N-terminal methionine in order to expose the catalytic cysteine. The hmces DNA-protein cross-link is then either reversed or degraded. According to a model, the HMCES DNA-protein cross-link. The polypeptide is Abasic site processing protein HMCES (Xenopus tropicalis (Western clawed frog)).